The primary structure comprises 227 residues: Uracil-DNA glycosylase (227 aa).

Asp-64 (proton acceptor) is an active-site residue.

It belongs to the uracil-DNA glycosylase (UDG) superfamily. UNG family.

The protein resides in the cytoplasm. It carries out the reaction Hydrolyzes single-stranded DNA or mismatched double-stranded DNA and polynucleotides, releasing free uracil.. Functionally, excises uracil residues from the DNA which can arise as a result of misincorporation of dUMP residues by DNA polymerase or due to deamination of cytosine. This chain is Uracil-DNA glycosylase, found in Sodalis glossinidius (strain morsitans).